A 469-amino-acid polypeptide reads, in one-letter code: tRNA-2-methylthio-N(6)-dimethylallyladenosine synthase (469 aa).

An MTTase N-terminal domain is found at 22–142; that stretch reads RKVFIKTYGC…LPEALRRAQQ (121 aa). Residues Cys-31, Cys-67, Cys-105, Cys-183, Cys-187, and Cys-190 each contribute to the [4Fe-4S] cluster site. In terms of domain architecture, Radical SAM core spans 169-401; that stretch reads RARGVTAFLT…QALLLKQQQE (233 aa). A TRAM domain is found at 404 to 466; it reads ESCIGKEIDL…TNSLFAERAE (63 aa).

It belongs to the methylthiotransferase family. MiaB subfamily. As to quaternary structure, monomer. [4Fe-4S] cluster serves as cofactor.

The protein resides in the cytoplasm. The catalysed reaction is N(6)-dimethylallyladenosine(37) in tRNA + (sulfur carrier)-SH + AH2 + 2 S-adenosyl-L-methionine = 2-methylsulfanyl-N(6)-dimethylallyladenosine(37) in tRNA + (sulfur carrier)-H + 5'-deoxyadenosine + L-methionine + A + S-adenosyl-L-homocysteine + 2 H(+). Functionally, catalyzes the methylthiolation of N6-(dimethylallyl)adenosine (i(6)A), leading to the formation of 2-methylthio-N6-(dimethylallyl)adenosine (ms(2)i(6)A) at position 37 in tRNAs that read codons beginning with uridine. The polypeptide is tRNA-2-methylthio-N(6)-dimethylallyladenosine synthase (Rhizobium etli (strain CIAT 652)).